The following is a 196-amino-acid chain: Putative HTH-type transcriptional regulator in exeN 3'region (196 aa).

The region spanning 120–185 (ASVGGDRLTR…ELFNLFLNHL (66 aa)) is the HTH luxR-type domain. The H-T-H motif DNA-binding region spans 144 to 163 (TEAIAAALGIGNGTVKNHRK).

This chain is Putative HTH-type transcriptional regulator in exeN 3'region, found in Aeromonas salmonicida.